Here is a 476-residue protein sequence, read N- to C-terminus: Acidic leucine-rich nuclear phosphoprotein 32-related protein 1 (476 aa).

3 LRR repeats span residues 51 to 72 (SLEH…PRLR), 73 to 92 (NLTR…DHLV), and 98 to 119 (SLRD…SPLA). An LRRCT domain is found at 131-169 (CPVTRVKDYRSKVFGMIRTLKYLDKMDADENERPESDDD). The segment at 157-476 (DADENERPES…VEDLRPFKHH (320 aa)) is disordered. Acidic residues-rich tracts occupy residues 165-194 (ESDD…EDPG), 222-232 (DVDEDESDADE), 252-289 (GDED…EDAV), 299-329 (SDEE…EAEP), 353-371 (EGED…EERL), 379-396 (EGND…EDTE), 415-436 (DAAE…DDGG), and 458-467 (GDDDEDDDGV).

The protein belongs to the ANP32 family.

This chain is Acidic leucine-rich nuclear phosphoprotein 32-related protein 1, found in Oryza sativa subsp. japonica (Rice).